The chain runs to 98 residues: Integration host factor subunit alpha (98 aa).

The segment at 49 to 71 (FGNFDLRDKNQRPGRNPKTGEDI) is disordered.

It belongs to the bacterial histone-like protein family. In terms of assembly, heterodimer of an alpha and a beta chain.

Functionally, this protein is one of the two subunits of integration host factor, a specific DNA-binding protein that functions in genetic recombination as well as in transcriptional and translational control. This is Integration host factor subunit alpha from Pectobacterium atrosepticum (strain SCRI 1043 / ATCC BAA-672) (Erwinia carotovora subsp. atroseptica).